Reading from the N-terminus, the 638-residue chain is DNA mismatch repair protein MutL (638 aa).

Residues 398–435 are disordered; the sequence is GREGTSFGTQTNAFGSMATPRDNSRGSYSAGESRQRTE.

The protein belongs to the DNA mismatch repair MutL/HexB family.

Functionally, this protein is involved in the repair of mismatches in DNA. It is required for dam-dependent methyl-directed DNA mismatch repair. May act as a 'molecular matchmaker', a protein that promotes the formation of a stable complex between two or more DNA-binding proteins in an ATP-dependent manner without itself being part of a final effector complex. The sequence is that of DNA mismatch repair protein MutL from Shewanella baltica (strain OS155 / ATCC BAA-1091).